Here is a 447-residue protein sequence, read N- to C-terminus: MFRARIRGIYATALTKLALDWGFKVVQPTPQIAERFGLRPDPSPPDVTVKDHESKTGVVAIGDCPAVDHLLERLREYADPVVAKASAGLHDVFVGRVVGEGLVEGPGGLMEVPGRYVLQPGAASVFTVVKPPVGPLRGVAVPEIVVDGKLLELNTTGRVAYSRHIGEEERLRLRILAETRLKAYASIGLRFKSSAKYAGEEELAREAEELYRELLRLSQGGPPGALLRRGRCLAVVLFDKRAKFKLDEARAAVVPTVRGHHALRGQGLGRCLDLLDHVGADVYERAAAFLARGRVAIYHVKPWGEVVKMRGEVVKALEDVLVVKRTLKPGGVLDGIGARIEPGTYALTCVPRSGGYVVHSYYSASGVYLGTYVNANTEPEWGRRVVYIDLLVDKAYGPDGVERVLDEEELQRYAHMLPERLRRPEAPGGKICTPEGLTSAPPRSSSA.

Residues 424 to 447 (PEAPGGKICTPEGLTSAPPRSSSA) are disordered.

This sequence belongs to the FAU-1 family.

Functionally, probable RNase involved in rRNA stability through maturation and/or degradation of precursor rRNAs. Binds to RNA in loop regions with AU-rich sequences. The sequence is that of Probable ribonuclease FAU-1 from Pyrobaculum neutrophilum (strain DSM 2338 / JCM 9278 / NBRC 100436 / V24Sta) (Thermoproteus neutrophilus).